Here is a 716-residue protein sequence, read N- to C-terminus: Fatty acid oxidation complex subunit alpha (716 aa).

Residues 1–189 (MIYQSPTIQV…KVGAVDAVVA (189 aa)) are enoyl-CoA hydratase/isomerase. Residue D296 coordinates substrate. The 3-hydroxyacyl-CoA dehydrogenase stretch occupies residues 311–716 (KAVNSAAVLG…AANNGSYYQA (406 aa)). NAD(+)-binding positions include M324, D343, 400–402 (VVE), K407, and S429. The active-site For 3-hydroxyacyl-CoA dehydrogenase activity is H450. An NAD(+)-binding site is contributed by N453. Residues N500 and Y660 each coordinate substrate.

The protein in the N-terminal section; belongs to the enoyl-CoA hydratase/isomerase family. It in the C-terminal section; belongs to the 3-hydroxyacyl-CoA dehydrogenase family. In terms of assembly, heterotetramer of two alpha chains (FadB) and two beta chains (FadA).

It catalyses the reaction a (3S)-3-hydroxyacyl-CoA + NAD(+) = a 3-oxoacyl-CoA + NADH + H(+). The catalysed reaction is a (3S)-3-hydroxyacyl-CoA = a (2E)-enoyl-CoA + H2O. It carries out the reaction a 4-saturated-(3S)-3-hydroxyacyl-CoA = a (3E)-enoyl-CoA + H2O. The enzyme catalyses (3S)-3-hydroxybutanoyl-CoA = (3R)-3-hydroxybutanoyl-CoA. It catalyses the reaction a (3Z)-enoyl-CoA = a 4-saturated (2E)-enoyl-CoA. The catalysed reaction is a (3E)-enoyl-CoA = a 4-saturated (2E)-enoyl-CoA. Its pathway is lipid metabolism; fatty acid beta-oxidation. Its function is as follows. Involved in the aerobic and anaerobic degradation of long-chain fatty acids via beta-oxidation cycle. Catalyzes the formation of 3-oxoacyl-CoA from enoyl-CoA via L-3-hydroxyacyl-CoA. It can also use D-3-hydroxyacyl-CoA and cis-3-enoyl-CoA as substrate. The sequence is that of Fatty acid oxidation complex subunit alpha from Shewanella oneidensis (strain ATCC 700550 / JCM 31522 / CIP 106686 / LMG 19005 / NCIMB 14063 / MR-1).